The sequence spans 577 residues: Proton channel OTOP3 (577 aa).

Residues 1–46 are disordered; that stretch reads MASQTSAPAEPAPMPSPEAKTTEGASSYDQADMETKHAGSPCPPKQ. Over 1–69 the chain is Cytoplasmic; sequence MASQTSAPAE…RDRQAQKAGQ (69 aa). The helical transmembrane segment at 70–90 threads the bilayer; it reads LFSGLLALNVVFLGGAFICSM. The Extracellular segment spans residues 91–100; it reads IFNKVSVTLG. A helical membrane pass occupies residues 101–124; the sequence is DVWILLAALKVLSLLWLLYYTVGT. The Cytoplasmic portion of the chain corresponds to 125 to 140; the sequence is TRKPHAVLYRDPHAGP. The helical transmembrane segment at 141-162 threads the bilayer; it reads IWVRGSLVLFGSCTVCLNIFRM. Topologically, residues 163-174 are extracellular; that stretch reads GYDVSHIHCKSE. A helical membrane pass occupies residues 175-198; sequence VELIFPAIEIVFMIIQTWVLWRHC. The Cytoplasmic segment spans residues 199–206; it reads KDCVQVQT. Residues 207–229 traverse the membrane as a helical segment; that stretch reads NFTRCGLMLTLATNLLMWVLAVT. Residues 230–276 are Extracellular-facing; the sequence is NDSMHREIEAELDALMEKFSGNGTNTCMCLNTTVCEVFRKGYLMLYP. Residues 277 to 293 traverse the membrane as a helical segment; it reads FSTEYCLICCAVLFVMW. At 294–319 the chain is on the cytoplasmic side; that stretch reads KNVSRSLAAHTGAHPNRSPFRLHGTI. Residues 320–339 traverse the membrane as a helical segment; sequence FGPLLGLLALVAGVCVFVLF. Topologically, residues 340-353 are extracellular; that stretch reads QIEASGPDIARQYF. A helical transmembrane segment spans residues 354 to 376; that stretch reads TLYYAFYVAVLPTMSLACLAGTA. The Cytoplasmic portion of the chain corresponds to 377–394; it reads IHGLEERELDTLKNPTRS. The helical transmembrane segment at 395 to 416 threads the bilayer; it reads LDVVLLMGAALGQMGIAYFSIV. The Extracellular segment spans residues 417–427; the sequence is AIVATQPHELL. A helical transmembrane segment spans residues 428–450; that stretch reads NQLILAYSLLLILQHITQNLFII. Over 451–510 the chain is Cytoplasmic; that stretch reads EGLHRRPLWEPAVSGVMEKQDVELPRRGSLRELGQDLRRASRAYIHSFSHLNWKRRMLKE. The helical transmembrane segment at 511–528 threads the bilayer; the sequence is ISLFLILCNITLWMMPAF. The Extracellular portion of the chain corresponds to 529–547; sequence GIHPEFENGLEKDFYGYRT. The chain crosses the membrane as a helical span at residues 548–570; sequence WFTIVNFGLPLGVFYRMHSVGGL. Residues 571-577 lie on the Cytoplasmic side of the membrane; the sequence is VEVYLGA.

Belongs to the otopetrin family. As to quaternary structure, homodimer. Expressed in epidermis, small intestine, stomach and retina.

The protein localises to the cell membrane. The catalysed reaction is H(+)(in) = H(+)(out). Its activity is regulated as follows. Activated by extracellular acidification. Activated by Zn(2+) under non-acidic conditions. Proton-selective channel gated by extracellular protons. The chain is Proton channel OTOP3 from Mus musculus (Mouse).